A 120-amino-acid polypeptide reads, in one-letter code: CLAVATA3/ESR (CLE)-related protein 9 (120 aa).

The N-terminal stretch at M1–A26 is a signal peptide. N35 carries an N-linked (GlcNAc...) asparagine glycan. The interval R85–N120 is disordered. The segment covering I100–L110 has biased composition (basic and acidic residues). Residues P112 and P115 each carry the hydroxyproline modification. A glycan (O-linked (Ara...) hydroxyproline) is linked at P115.

It belongs to the CLV3/ESR signal peptide family. Post-translationally, the O-glycosylation (arabinosylation) of the hydroxyproline Pro-115 enhances binding affinity of the CLE9p peptide for its receptor. In terms of tissue distribution, mostly expressed in leaves, flowers, stems and apex, and, to a lower extent, in seedlings, roots, siliques and pollen.

It is found in the secreted. The protein localises to the extracellular space. Its function is as follows. Extracellular signal peptide that regulates cell fate. Represses root apical meristem maintenance. Regulates the transition of protophloem cells from proliferation to differentiation, thus impinging on postembryonic growth capacity of the root meristem; this signaling pathway requires CRN and CLV2. The protein is CLAVATA3/ESR (CLE)-related protein 9 of Arabidopsis thaliana (Mouse-ear cress).